The chain runs to 118 residues: Large ribosomal subunit protein bL19 (118 aa).

Belongs to the bacterial ribosomal protein bL19 family.

Functionally, this protein is located at the 30S-50S ribosomal subunit interface and may play a role in the structure and function of the aminoacyl-tRNA binding site. In Dictyoglomus turgidum (strain DSM 6724 / Z-1310), this protein is Large ribosomal subunit protein bL19.